A 583-amino-acid chain; its full sequence is Aspartate--tRNA ligase (583 aa).

Glu-174 serves as a coordination point for L-aspartate. The interval 198 to 201 is aspartate; it reads QITK. Residue Arg-220 participates in L-aspartate binding. ATP is bound by residues 220-222 and Gln-229; that span reads RDE. His-443 is a binding site for L-aspartate. Residue Glu-477 participates in ATP binding. Residue Arg-484 participates in L-aspartate binding. Residue 529–532 participates in ATP binding; sequence GLDR.

This sequence belongs to the class-II aminoacyl-tRNA synthetase family. Type 1 subfamily. As to quaternary structure, homodimer.

Its subcellular location is the cytoplasm. It catalyses the reaction tRNA(Asp) + L-aspartate + ATP = L-aspartyl-tRNA(Asp) + AMP + diphosphate. Functionally, catalyzes the attachment of L-aspartate to tRNA(Asp) in a two-step reaction: L-aspartate is first activated by ATP to form Asp-AMP and then transferred to the acceptor end of tRNA(Asp). The sequence is that of Aspartate--tRNA ligase from Streptococcus agalactiae serotype III (strain NEM316).